The chain runs to 720 residues: Phenylalanine--tRNA ligase beta subunit, chloroplastic (720 aa).

Residues 319-404 (NSTLNIDISL…RVYGYNQFQS (86 aa)) form the B5 domain. Mg(2+) contacts are provided by D382, D388, E391, and E392. The 94-residue stretch at 626–719 (SKYPCITRDL…IIKKLNLEIR (94 aa)) folds into the FDX-ACB domain.

The protein belongs to the phenylalanyl-tRNA synthetase beta subunit family. Type 1 subfamily. As to quaternary structure, tetramer of two alpha and two beta subunits. Requires Mg(2+) as cofactor.

The protein resides in the plastid. Its subcellular location is the chloroplast. The enzyme catalyses tRNA(Phe) + L-phenylalanine + ATP = L-phenylalanyl-tRNA(Phe) + AMP + diphosphate + H(+). This chain is Phenylalanine--tRNA ligase beta subunit, chloroplastic (pheT), found in Porphyra purpurea (Red seaweed).